Reading from the N-terminus, the 177-residue chain is ATP synthase subunit b (177 aa).

A helical membrane pass occupies residues 29-49 (FFFVLAIFLIVLAVIGTFVVP).

Belongs to the ATPase B chain family. As to quaternary structure, F-type ATPases have 2 components, F(1) - the catalytic core - and F(0) - the membrane proton channel. F(1) has five subunits: alpha(3), beta(3), gamma(1), delta(1), epsilon(1). F(0) has three main subunits: a(1), b(2) and c(10-14). The alpha and beta chains form an alternating ring which encloses part of the gamma chain. F(1) is attached to F(0) by a central stalk formed by the gamma and epsilon chains, while a peripheral stalk is formed by the delta and b chains.

The protein localises to the cell membrane. In terms of biological role, f(1)F(0) ATP synthase produces ATP from ADP in the presence of a proton or sodium gradient. F-type ATPases consist of two structural domains, F(1) containing the extramembraneous catalytic core and F(0) containing the membrane proton channel, linked together by a central stalk and a peripheral stalk. During catalysis, ATP synthesis in the catalytic domain of F(1) is coupled via a rotary mechanism of the central stalk subunits to proton translocation. Its function is as follows. Component of the F(0) channel, it forms part of the peripheral stalk, linking F(1) to F(0). The sequence is that of ATP synthase subunit b from Mycolicibacterium paratuberculosis (strain ATCC BAA-968 / K-10) (Mycobacterium paratuberculosis).